Reading from the N-terminus, the 34-residue chain is Phalloidin proprotein (34 aa).

The propeptide occupies 1–10; sequence MSDINASRLP. A cross-link (cyclopeptide (Ala-Pro)) is located at residues 11–17; it reads AWLATCP. Positions 12–16 form a cross-link, 2'-cysteinyl-6'-hydroxytryptophan sulfoxide (Trp-Cys); it reads WLATC. A propeptide spanning residues 18-34 is cleaved from the precursor; that stretch reads CVGDDVNPTLSRGESLC.

It belongs to the MSDIN fungal toxin family. Processed by the macrocyclase-peptidase enzyme POPB to yield a toxic cyclic heptapeptide. POPB first removes 10 residues from the N-terminus. Conformational trapping of the remaining peptide forces the enzyme to release this intermediate rather than proceed to macrocyclization. The enzyme rebinds the remaining peptide in a different conformation and catalyzes macrocyclization of the N-terminal 7 residues.

Functionally, toxin that belongs to the bicyclic heptapeptides called phallotoxins. Although structurally related to amatoxins, phallotoxins have a different mode of action, which is the stabilization of F-actin. Phallotoxins are poisonous when administered parenterally, but not orally because of poor absorption. The protein is Phalloidin proprotein of Amanita phalloides (Death cap).